A 574-amino-acid polypeptide reads, in one-letter code: MDKYDKIIDLTKRRGFLWNSFEIYGGIAGFFDYGPLGAILKSSVINTWRKHYIINEGFYEIDSPTVNPYEVLKASGHVENFTDPLVECKSCLESFRADHIIEENIEVDTEGKTLNELQEMIEKNNIKCPKCGGEFKEVNTFNLMFATSIGPGGKRAAFMRPETAQGIFIQFKRISQFFRNKLPYGAVQIGKAYRNEISPRQGVIRLREFTQAEAEFFIDSRKKENFEKFESVKDLILPLLPGKNQENESLSSEEKIVRMSLGDAVKNKIIAHEAIAYYIAVTKKFLMDIGIDETKLRFRQHLPNEMAHYAADCWDAELYTDRYGWIECVGIADRTDYDLRAHMKNSGEDLSVFVEFDESKEIEVYEIELNYKLVGKTFKGDAKILEESLKELSNDKMEELIKTLKNNEKYILKTCKRDFEVLNEYLTVKKVKKNVTGEKIVPHVIEPSYGIDRITYCVIEHAFKEEDDRTLLAFVNTVSPVKVGVFPLVNKEGMDEIAENLKNKFRKNGIIAEYDDSGAIGRRYMRMDEIGTPFCVTVDGETLKDNTVTIRERDSREQFRIPLDGVVDYIKEKL.

Residues Arg-96 and Glu-162 each contribute to the substrate site. ATP is bound by residues 194–196, 204–209, 327–328, and 450–453; these read RNE, IRLREF, EC, and GIDR. 209–213 provides a ligand contact to substrate; sequence FTQAE. Position 446-450 (446-450) interacts with substrate; sequence EPSYG.

It belongs to the class-II aminoacyl-tRNA synthetase family.

The protein resides in the cytoplasm. It catalyses the reaction tRNA(Gly) + glycine + ATP = glycyl-tRNA(Gly) + AMP + diphosphate. Its function is as follows. Catalyzes the attachment of glycine to tRNA(Gly). This chain is Glycine--tRNA ligase, found in Methanococcus vannielii (strain ATCC 35089 / DSM 1224 / JCM 13029 / OCM 148 / SB).